Here is a 358-residue protein sequence, read N- to C-terminus: tRNA-specific 2-thiouridylase MnmA (358 aa).

Residues 6-13 (AMSGGVDS) and Leu32 contribute to the ATP site. The active-site Nucleophile is the Cys101. The cysteines at positions 101 and 193 are disulfide-linked. ATP is bound at residue Gly125. The tract at residues 143–145 (KDQ) is interaction with tRNA. Cys193 acts as the Cysteine persulfide intermediate in catalysis.

The protein belongs to the MnmA/TRMU family.

Its subcellular location is the cytoplasm. It carries out the reaction S-sulfanyl-L-cysteinyl-[protein] + uridine(34) in tRNA + AH2 + ATP = 2-thiouridine(34) in tRNA + L-cysteinyl-[protein] + A + AMP + diphosphate + H(+). In terms of biological role, catalyzes the 2-thiolation of uridine at the wobble position (U34) of tRNA, leading to the formation of s(2)U34. This chain is tRNA-specific 2-thiouridylase MnmA, found in Mycobacterium avium (strain 104).